A 415-amino-acid chain; its full sequence is Imidazolonepropionase (415 aa).

Fe(3+) contacts are provided by His-74 and His-76. Zn(2+) contacts are provided by His-74 and His-76. Positions 83, 146, and 179 each coordinate 4-imidazolone-5-propanoate. Tyr-146 lines the N-formimidoyl-L-glutamate pocket. His-244 provides a ligand contact to Fe(3+). A Zn(2+)-binding site is contributed by His-244. Position 247 (Gln-247) interacts with 4-imidazolone-5-propanoate. Asp-319 serves as a coordination point for Fe(3+). Asp-319 is a binding site for Zn(2+). Residues Asn-321 and Gly-323 each contribute to the N-formimidoyl-L-glutamate site. 4-imidazolone-5-propanoate is bound at residue Thr-324.

This sequence belongs to the metallo-dependent hydrolases superfamily. HutI family. Zn(2+) is required as a cofactor. Fe(3+) serves as cofactor.

The protein localises to the cytoplasm. The enzyme catalyses 4-imidazolone-5-propanoate + H2O = N-formimidoyl-L-glutamate. It participates in amino-acid degradation; L-histidine degradation into L-glutamate; N-formimidoyl-L-glutamate from L-histidine: step 3/3. Its function is as follows. Catalyzes the hydrolytic cleavage of the carbon-nitrogen bond in imidazolone-5-propanoate to yield N-formimidoyl-L-glutamate. It is the third step in the universal histidine degradation pathway. The sequence is that of Imidazolonepropionase from Cupriavidus metallidurans (strain ATCC 43123 / DSM 2839 / NBRC 102507 / CH34) (Ralstonia metallidurans).